The chain runs to 595 residues: Leiomodin-1 (595 aa).

Disordered stretches follow at residues 1–322 (MSKV…KVKN) and 467–568 (DKQR…QEKN). Ser12 carries the phosphoserine modification. The span at 27-40 (EEMEELEKELDVVD) shows a compositional bias: acidic residues. Composition is skewed to basic and acidic residues over residues 72–105 (CEKE…EDKG), 117–127 (QDSDVGKEPKK), 134–193 (FSRD…EKTG), 201–224 (SRDK…KLTA), 232–251 (RQED…KPEV), 259–289 (RDSR…REKQ), 467–476 (DKQRQKRLQE), and 484–493 (SGEKKDRLEV). The residue at position 85 (Ser85) is a Phosphoserine. Ser135 is modified (phosphoserine). A run of 8 repeats spans residues 165 to 180 (AAVD…REER), 181 to 196 (AAAT…GSVR), 197 to 212 (NAGL…EEVK), 213 to 227 (EPSK…AENR), 228 to 243 (STVG…ESRE), 244 to 257 (DRDK…IGCG), 258 to 273 (SRDS…KEET), and 274 to 288 (QPDK…TREK). An 8 X approximate tandem repeats region spans residues 165–288 (AAVDRKEAGK…VREEGKTREK (124 aa)). Pro residues-rich tracts occupy residues 503-513 (SPKPSPQPSPK) and 527-538 (AAPPPPPPPLAP). The interval 503–522 (SPKPSPQPSPKSAPKNSPKK) is 5 X 4 AA approximate tandem repeats. Ser550 carries the post-translational modification Phosphoserine. Residues 569-588 (SRDQLLAAIRSSNLKQLKKV) form the WH2 domain.

In terms of tissue distribution, detected in smooth muscle, in stomach and uterus, blood vessel wall, and in slow fibers in extraocular muscle, urinary bladder and sternothyroid muscle (at protein level).

The protein resides in the cytoplasm. It localises to the myofibril. It is found in the sarcomere. Its subcellular location is the cytoskeleton. Functionally, required for proper contractility of visceral smooth muscle cells. Mediates nucleation of actin filaments. The chain is Leiomodin-1 from Rattus norvegicus (Rat).